A 361-amino-acid polypeptide reads, in one-letter code: tRNA pseudouridine synthase D (361 aa).

Residue Asp76 is the Nucleophile of the active site. Residues Gly151–Ile318 form the TRUD domain.

This sequence belongs to the pseudouridine synthase TruD family.

The catalysed reaction is uridine(13) in tRNA = pseudouridine(13) in tRNA. Responsible for synthesis of pseudouridine from uracil-13 in transfer RNAs. The protein is tRNA pseudouridine synthase D of Wolinella succinogenes (strain ATCC 29543 / DSM 1740 / CCUG 13145 / JCM 31913 / LMG 7466 / NCTC 11488 / FDC 602W) (Vibrio succinogenes).